Reading from the N-terminus, the 425-residue chain is Synaptotagmin-4 (425 aa).

Residues 1 to 16 lie on the Vesicular side of the membrane; it reads MAPITTSRVEFDEIPT. Residues 17 to 37 traverse the membrane as a helical segment; it reads VVGIFSAFGLVFTVSLFAWIC. At 38 to 425 the chain is on the cytoplasmic side; it reads CQRRSAKSNK…IAKWHMLCDG (388 aa). The interval 127 to 147 is disordered; it reads TETEKEANSPESLKSSTSLTS. Serine 135 bears the Phosphoserine; by MAPK8 mark. Positions 137–146 are enriched in low complexity; the sequence is ESLKSSTSLT. C2 domains are found at residues 153–274 and 287–420; these read KLGT…MLMT and GRGE…AKWH. The Ca(2+) site is built by aspartate 246, serine 249, and aspartate 252.

This sequence belongs to the synaptotagmin family. As to quaternary structure, interacts with KIF1A; the interaction increases in presence of calcium and decreases when SYT4 is phosphorylated at Ser-135. Requires Ca(2+) as cofactor. Post-translationally, phosphorylation at Ser-135 by MAPK8/JNK1 reduces interaction with KIF1A and neuronal dense core vesicles mobility. In terms of tissue distribution, expressed in many regions of the nervous system but is undetectable in extra neural tissues.

It is found in the cytoplasmic vesicle. It localises to the secretory vesicle. The protein localises to the neuronal dense core vesicle membrane. Its function is as follows. Synaptotagmin family member which does not bind Ca(2+). Plays a role in dendrite formation by melanocytes. Functionally, synaptotagmin family member which does not bind Ca(2+). Involved in neuronal dense core vesicles (DCVs) mobility through its interaction with KIF1A. Upon increased neuronal activity, phosphorylation by MAPK8/JNK1 destabilizes the interaction with KIF1A and captures DCVs to synapses. Plays a role in dendrite formation by melanocytes. The sequence is that of Synaptotagmin-4 (Syt4) from Mus musculus (Mouse).